A 385-amino-acid polypeptide reads, in one-letter code: 1-deoxy-D-xylulose 5-phosphate reductoisomerase (385 aa).

Residues Thr10, Gly11, Ile13, Gly36, and Asn38 each coordinate NADPH. Position 123 (Lys123) interacts with 1-deoxy-D-xylulose 5-phosphate. Glu124 is a binding site for NADPH. Mn(2+) is bound at residue Asp148. 1-deoxy-D-xylulose 5-phosphate is bound by residues Ser149, Glu150, Ser172, and His195. Glu150 provides a ligand contact to Mn(2+). Residue Gly201 participates in NADPH binding. The 1-deoxy-D-xylulose 5-phosphate site is built by Ser208, Asn213, Lys214, and Glu217. Glu217 serves as a coordination point for Mn(2+).

Belongs to the DXR family. The cofactor is Mg(2+). It depends on Mn(2+) as a cofactor.

The catalysed reaction is 2-C-methyl-D-erythritol 4-phosphate + NADP(+) = 1-deoxy-D-xylulose 5-phosphate + NADPH + H(+). Its pathway is isoprenoid biosynthesis; isopentenyl diphosphate biosynthesis via DXP pathway; isopentenyl diphosphate from 1-deoxy-D-xylulose 5-phosphate: step 1/6. Its function is as follows. Catalyzes the NADPH-dependent rearrangement and reduction of 1-deoxy-D-xylulose-5-phosphate (DXP) to 2-C-methyl-D-erythritol 4-phosphate (MEP). This chain is 1-deoxy-D-xylulose 5-phosphate reductoisomerase, found in Anaplasma phagocytophilum (strain HZ).